A 173-amino-acid polypeptide reads, in one-letter code: Crossover junction endodeoxyribonuclease RuvC (173 aa).

Active-site residues include Asp-8, Glu-69, and Asp-141. Mg(2+)-binding residues include Asp-8, Glu-69, and Asp-141.

This sequence belongs to the RuvC family. In terms of assembly, homodimer which binds Holliday junction (HJ) DNA. The HJ becomes 2-fold symmetrical on binding to RuvC with unstacked arms; it has a different conformation from HJ DNA in complex with RuvA. In the full resolvosome a probable DNA-RuvA(4)-RuvB(12)-RuvC(2) complex forms which resolves the HJ. Requires Mg(2+) as cofactor.

The protein resides in the cytoplasm. It catalyses the reaction Endonucleolytic cleavage at a junction such as a reciprocal single-stranded crossover between two homologous DNA duplexes (Holliday junction).. Its function is as follows. The RuvA-RuvB-RuvC complex processes Holliday junction (HJ) DNA during genetic recombination and DNA repair. Endonuclease that resolves HJ intermediates. Cleaves cruciform DNA by making single-stranded nicks across the HJ at symmetrical positions within the homologous arms, yielding a 5'-phosphate and a 3'-hydroxyl group; requires a central core of homology in the junction. The consensus cleavage sequence is 5'-(A/T)TT(C/G)-3'. Cleavage occurs on the 3'-side of the TT dinucleotide at the point of strand exchange. HJ branch migration catalyzed by RuvA-RuvB allows RuvC to scan DNA until it finds its consensus sequence, where it cleaves and resolves the cruciform DNA. This chain is Crossover junction endodeoxyribonuclease RuvC, found in Xylella fastidiosa (strain 9a5c).